A 343-amino-acid polypeptide reads, in one-letter code: Ribosomal RNA small subunit methyltransferase C (343 aa).

This sequence belongs to the methyltransferase superfamily. RsmC family. As to quaternary structure, monomer.

The protein resides in the cytoplasm. It carries out the reaction guanosine(1207) in 16S rRNA + S-adenosyl-L-methionine = N(2)-methylguanosine(1207) in 16S rRNA + S-adenosyl-L-homocysteine + H(+). Functionally, specifically methylates the guanine in position 1207 of 16S rRNA in the 30S particle. This chain is Ribosomal RNA small subunit methyltransferase C, found in Escherichia coli (strain ATCC 8739 / DSM 1576 / NBRC 3972 / NCIMB 8545 / WDCM 00012 / Crooks).